Here is a 274-residue protein sequence, read N- to C-terminus: Hydroxyethylthiazole kinase (274 aa).

A substrate-binding site is contributed by Met-50. ATP-binding residues include Arg-126 and Ser-171. Ala-200 lines the substrate pocket.

Belongs to the Thz kinase family. Mg(2+) serves as cofactor.

The enzyme catalyses 5-(2-hydroxyethyl)-4-methylthiazole + ATP = 4-methyl-5-(2-phosphooxyethyl)-thiazole + ADP + H(+). The protein operates within cofactor biosynthesis; thiamine diphosphate biosynthesis; 4-methyl-5-(2-phosphoethyl)-thiazole from 5-(2-hydroxyethyl)-4-methylthiazole: step 1/1. Catalyzes the phosphorylation of the hydroxyl group of 4-methyl-5-beta-hydroxyethylthiazole (THZ). The sequence is that of Hydroxyethylthiazole kinase from Acinetobacter baylyi (strain ATCC 33305 / BD413 / ADP1).